The chain runs to 355 residues: Alanine racemase (355 aa).

Lysine 37 serves as the catalytic Proton acceptor; specific for D-alanine. At lysine 37 the chain carries N6-(pyridoxal phosphate)lysine. Arginine 129 contacts substrate. Tyrosine 251 acts as the Proton acceptor; specific for L-alanine in catalysis. Methionine 299 serves as a coordination point for substrate.

This sequence belongs to the alanine racemase family. It depends on pyridoxal 5'-phosphate as a cofactor.

It carries out the reaction L-alanine = D-alanine. It functions in the pathway amino-acid biosynthesis; D-alanine biosynthesis; D-alanine from L-alanine: step 1/1. Its function is as follows. Catalyzes the interconversion of L-alanine and D-alanine. May also act on other amino acids. This chain is Alanine racemase (alr), found in Deinococcus geothermalis (strain DSM 11300 / CIP 105573 / AG-3a).